The following is a 1755-amino-acid chain: Transposon Ty1-GR1 Gag-Pol polyprotein (1755 aa).

A compositionally biased stretch (low complexity) spans 1–16; the sequence is MESQQLSQHSHISHGS. Disordered stretches follow at residues 1 to 93, 126 to 173, and 352 to 421; these read MESQ…MMTQ, PQSQ…RPPP, and GSRN…SKST. Polar residues-rich tracts occupy residues 48–60, 71–93, and 127–152; these read TKAN…TPAS, SPQT…MMTQ, and QSQF…GNTF. The span at 153–165 shows a compositional bias: low complexity; that stretch reads TDSSSADSDMTST. Positions 299–401 are RNA-binding; that stretch reads NNGIHINNKV…NSKSKTARAH (103 aa). Residues 402–418 are compositionally biased toward low complexity; the sequence is NVSTSNNSPSTDNDSIS. Position 416 is a phosphoserine (Ser-416). Catalysis depends on Asp-461, which acts as the For protease activity; shared with dimeric partner. Residues 583 to 640 are integrase-type zinc finger-like; that stretch reads NVHTSESTRKYPYPFIHRMLAHANAQTIRYSLKNNTITYFNESDVDWSSAIDYQCPDC. The Integrase catalytic domain maps to 660 to 835; sequence NSYEPFQYLH…AGLDISTLLP (176 aa). Residues Asp-671 and Asp-736 each contribute to the Mg(2+) site. Disordered stretches follow at residues 956–1087, 1092–1111, and 1130–1187; these read SKAV…ETEK, RSPS…NIVP, and DLPL…DNET. Low complexity predominate over residues 960-969; it reads SPTDSTPPST. The span at 1005–1015 shows a compositional bias: polar residues; that stretch reads STPQISNIEST. Residues 1038-1053 show a composition bias toward basic and acidic residues; the sequence is ESSHASKSKDFRHSDS. Composition is skewed to polar residues over residues 1054 to 1082 and 1101 to 1111; these read YSEN…QISD and PENNSSHNIVP. The short motif at 1178 to 1212 is the Bipartite nuclear localization signal element; it reads KKRSLEDNETEIKVSRDTWNTKNMRSLEPPRSKKR. The Reverse transcriptase Ty1/copia-type domain occupies 1338 to 1476; the sequence is NNYYITQLDI…DILGLEIKYQ (139 aa). 6 residues coordinate Mg(2+): Asp-1346, Asp-1427, Asp-1428, Asp-1610, Glu-1652, and Asp-1685. The RNase H Ty1/copia-type domain maps to 1610-1752; the sequence is DASYGNQPYY…IKTFKLLTNK (143 aa).

As to quaternary structure, the capsid protein forms a homotrimer, from which the VLPs are assembled. The protease is a homodimer, whose active site consists of two apposed aspartic acid residues. Initially, virus-like particles (VLPs) are composed of the structural unprocessed proteins Gag and Gag-Pol, and also contain the host initiator methionine tRNA (tRNA(i)-Met) which serves as a primer for minus-strand DNA synthesis, and a dimer of genomic Ty RNA. Processing of the polyproteins occurs within the particle and proceeds by an ordered pathway, called maturation. First, the protease (PR) is released by autocatalytic cleavage of the Gag-Pol polyprotein yielding capsid protein p45 and a Pol-p154 precursor protein. This cleavage is a prerequisite for subsequent processing of Pol-p154 at the remaining sites to release the mature structural and catalytic proteins. Maturation takes place prior to the RT reaction and is required to produce transposition-competent VLPs.

The protein resides in the cytoplasm. It is found in the nucleus. The catalysed reaction is DNA(n) + a 2'-deoxyribonucleoside 5'-triphosphate = DNA(n+1) + diphosphate. The enzyme catalyses Endonucleolytic cleavage to 5'-phosphomonoester.. In terms of biological role, capsid protein (CA) is the structural component of the virus-like particle (VLP), forming the shell that encapsulates the retrotransposons dimeric RNA genome. The particles are assembled from trimer-clustered units and there are holes in the capsid shells that allow for the diffusion of macromolecules. CA also has nucleocapsid-like chaperone activity, promoting primer tRNA(i)-Met annealing to the multipartite primer-binding site (PBS), dimerization of Ty1 RNA and initiation of reverse transcription. Its function is as follows. The aspartyl protease (PR) mediates the proteolytic cleavages of the Gag and Gag-Pol polyproteins after assembly of the VLP. Reverse transcriptase/ribonuclease H (RT) is a multifunctional enzyme that catalyzes the conversion of the retro-elements RNA genome into dsDNA within the VLP. The enzyme displays a DNA polymerase activity that can copy either DNA or RNA templates, and a ribonuclease H (RNase H) activity that cleaves the RNA strand of RNA-DNA heteroduplexes during plus-strand synthesis and hydrolyzes RNA primers. The conversion leads to a linear dsDNA copy of the retrotransposon that includes long terminal repeats (LTRs) at both ends. Functionally, integrase (IN) targets the VLP to the nucleus, where a subparticle preintegration complex (PIC) containing at least integrase and the newly synthesized dsDNA copy of the retrotransposon must transit the nuclear membrane. Once in the nucleus, integrase performs the integration of the dsDNA into the host genome. This Saccharomyces cerevisiae (strain ATCC 204508 / S288c) (Baker's yeast) protein is Transposon Ty1-GR1 Gag-Pol polyprotein (TY1B-GR1).